The sequence spans 332 residues: Ferredoxin--NADP reductase (332 aa).

Positions 33, 41, 46, 86, 121, 282, and 325 each coordinate FAD.

It belongs to the ferredoxin--NADP reductase type 2 family. Homodimer. The cofactor is FAD.

The enzyme catalyses 2 reduced [2Fe-2S]-[ferredoxin] + NADP(+) + H(+) = 2 oxidized [2Fe-2S]-[ferredoxin] + NADPH. The protein is Ferredoxin--NADP reductase of Metallosphaera sedula (strain ATCC 51363 / DSM 5348 / JCM 9185 / NBRC 15509 / TH2).